The sequence spans 229 residues: Endonuclease NucS (229 aa).

Belongs to the NucS endonuclease family.

It is found in the cytoplasm. Functionally, cleaves both 3' and 5' ssDNA extremities of branched DNA structures. This chain is Endonuclease NucS, found in Corynebacterium diphtheriae (strain ATCC 700971 / NCTC 13129 / Biotype gravis).